The primary structure comprises 355 residues: Protein pelota homolog (355 aa).

Belongs to the eukaryotic release factor 1 family. Pelota subfamily. In terms of assembly, monomer. A divalent metal cation serves as cofactor.

It is found in the cytoplasm. Its function is as follows. May function in recognizing stalled ribosomes, interact with stem-loop structures in stalled mRNA molecules, and effect endonucleolytic cleavage of the mRNA. May play a role in the release non-functional ribosomes and degradation of damaged mRNAs. Has endoribonuclease activity. The sequence is that of Protein pelota homolog from Natronomonas pharaonis (strain ATCC 35678 / DSM 2160 / CIP 103997 / JCM 8858 / NBRC 14720 / NCIMB 2260 / Gabara) (Halobacterium pharaonis).